The sequence spans 784 residues: Protein DBF4 homolog B (784 aa).

Positions 27–117 (CREITFAGKS…SRGKQLLKKV (91 aa)) constitute a BRCT domain. Positions 222–243 (TVKKKDPGDQEEEEGQRSQKPQ) are disordered. The DBF4-type zinc finger occupies 244-293 (ARKRKGYCECCEETFDTLSEHLVGEHHFRFVSNPLSYKMIDDLAAQLTCD). Zn(2+)-binding residues include C251, C254, H264, and H270. Disordered stretches follow at residues 299-332 (FGSP…GNEG), 348-368 (HADC…AEEP), and 495-529 (TVGS…AQPA). A compositionally biased stretch (polar residues) spans 498–507 (SQGDVTSHSA).

As to quaternary structure, forms a complex with cdc7. In terms of processing, phosphorylated. Stably phosphorylated throughout the cell cycle.

The protein resides in the nucleus. Regulatory subunit for cdc7 which activates its kinase activity thereby playing a central role in DNA replication and cell proliferation. Specifically required during the initiation of DNA replication in egg and during early embryonic development. The complex cdc7-dbf4b phosphorylates mcm2 and mcm4 subunits and is required for cdc45 loading. This is Protein DBF4 homolog B (dbf4b) from Xenopus laevis (African clawed frog).